Consider the following 256-residue polypeptide: 5-keto-4-deoxy-D-glucarate aldolase (256 aa).

The Proton acceptor role is filled by His50. Gln151 is a binding site for substrate. Glu153 contacts Mg(2+). Positions 178 and 179 each coordinate substrate. Asp179 contacts Mg(2+).

Belongs to the HpcH/HpaI aldolase family. KDGluc aldolase subfamily. In terms of assembly, homohexamer; trimer of dimers. Mg(2+) is required as a cofactor.

It carries out the reaction 5-dehydro-4-deoxy-D-glucarate = 2-hydroxy-3-oxopropanoate + pyruvate. It catalyses the reaction 2-dehydro-3-deoxy-D-glucarate = 2-hydroxy-3-oxopropanoate + pyruvate. The protein operates within carbohydrate acid metabolism; galactarate degradation; D-glycerate from galactarate: step 2/3. Functionally, catalyzes the reversible retro-aldol cleavage of both 5-keto-4-deoxy-D-glucarate and 2-keto-3-deoxy-D-glucarate to pyruvate and tartronic semialdehyde. The sequence is that of 5-keto-4-deoxy-D-glucarate aldolase from Salmonella gallinarum (strain 287/91 / NCTC 13346).